The primary structure comprises 187 residues: Large ribosomal subunit protein bL17 (187 aa).

The protein belongs to the bacterial ribosomal protein bL17 family. In terms of assembly, part of the 50S ribosomal subunit. Contacts protein L32.

This chain is Large ribosomal subunit protein bL17, found in Rhodococcus opacus (strain B4).